A 285-amino-acid chain; its full sequence is NADPH-dependent 7-cyano-7-deazaguanine reductase (285 aa).

Residue 91 to 93 (IES) coordinates substrate. 93–94 (SK) serves as a coordination point for NADPH. The Thioimide intermediate role is filled by Cys191. The active-site Proton donor is Asp198. Residue 230–231 (HE) participates in substrate binding. NADPH is bound at residue 259-260 (RG).

The protein belongs to the GTP cyclohydrolase I family. QueF type 2 subfamily. Homodimer.

Its subcellular location is the cytoplasm. It catalyses the reaction 7-aminomethyl-7-carbaguanine + 2 NADP(+) = 7-cyano-7-deazaguanine + 2 NADPH + 3 H(+). It participates in tRNA modification; tRNA-queuosine biosynthesis. In terms of biological role, catalyzes the NADPH-dependent reduction of 7-cyano-7-deazaguanine (preQ0) to 7-aminomethyl-7-deazaguanine (preQ1). This chain is NADPH-dependent 7-cyano-7-deazaguanine reductase, found in Legionella pneumophila (strain Paris).